The following is a 349-amino-acid chain: Very-long-chain 3-oxoacyl-CoA reductase (349 aa).

Residues 19–39 (AIIFALLLGVFKLTVFSLKFA) form a helical membrane-spanning segment. Residues V65, D119, N146, Y221, K225, V254, and S256 each coordinate NADP(+). The active-site Proton donor is Y221. The active-site Lowers pKa of active site Tyr is the K225.

Belongs to the short-chain dehydrogenases/reductases (SDR) family.

It is found in the endoplasmic reticulum membrane. The enzyme catalyses a very-long-chain (3R)-3-hydroxyacyl-CoA + NADP(+) = a very-long-chain 3-oxoacyl-CoA + NADPH + H(+). Its pathway is lipid metabolism; fatty acid biosynthesis. Functionally, component of the microsomal membrane bound fatty acid elongation system, which produces the 26-carbon very long-chain fatty acids (VLCFA) from palmitate. Catalyzes the reduction of the 3-ketoacyl-CoA intermediate that is formed in each cycle of fatty acid elongation. VLCFAs serve as precursors for ceramide and sphingolipids. In Candida albicans (strain SC5314 / ATCC MYA-2876) (Yeast), this protein is Very-long-chain 3-oxoacyl-CoA reductase.